The following is a 311-amino-acid chain: Pyrimidine-specific ribonucleoside hydrolase RihA (311 aa).

The active site involves His240.

It belongs to the IUNH family. RihA subfamily.

Hydrolyzes with equal efficiency cytidine or uridine to ribose and cytosine or uracil, respectively. This is Pyrimidine-specific ribonucleoside hydrolase RihA from Escherichia coli (strain ATCC 8739 / DSM 1576 / NBRC 3972 / NCIMB 8545 / WDCM 00012 / Crooks).